The chain runs to 179 residues: Bifunctional protein PyrR (179 aa).

Substrate-binding positions include 39 to 40 (RR), 101 to 109 (DDVLFTGRT), Arg-134, and Val-158. A PRPP-binding motif is present at residues 97-109 (VILIDDVLFTGRT).

The protein belongs to the purine/pyrimidine phosphoribosyltransferase family. PyrR subfamily.

It carries out the reaction UMP + diphosphate = 5-phospho-alpha-D-ribose 1-diphosphate + uracil. Regulates the transcription of the pyrimidine nucleotide (pyr) operon in response to exogenous pyrimidines. Its function is as follows. Also displays a weak uracil phosphoribosyltransferase activity which is not physiologically significant. The sequence is that of Bifunctional protein PyrR from Haemophilus ducreyi (strain 35000HP / ATCC 700724).